The sequence spans 247 residues: Neurotrophic factor BDNF precursor form (247 aa).

Residues 1–18 (MTILFLTMVISYFGCMKA) form the signal peptide. Residues 19-128 (APMKEANVRG…AANMSMRVRR (110 aa)) constitute a propeptide that is removed on maturation. An N-linked (GlcNAc...) asparagine glycan is attached at asparagine 121. 3 disulfide bridges follow: cysteine 141–cysteine 208, cysteine 186–cysteine 237, and cysteine 196–cysteine 239.

The protein belongs to the NGF-beta family. As to quaternary structure, monomers and homodimers. Binds to NTRK2/TRKB. Can form heterodimers with other neurotrophin family members, such as NTF3 and NTF4 (in vitro), but the physiological relevance of this is not clear. BDNF precursor form: interacts with the heterodimer formed by NGFR and SORCS2. Mature BDNF has much lower affinity for the heterodimer formed by NGFR and SORCS2. In terms of processing, N-glycosylated and glycosulfated, contrary to mature BDNF. Post-translationally, mature BDNF is produced by proteolytic removal of the propeptide, catalyzed by a FURIN family member. In addition, the precursor form is proteolytically cleaved within the propeptide, but this is not an obligatory intermediate for the production of mature BDNF. Can be converted into mature BDNF by plasmin (PLG).

It localises to the secreted. Important signaling molecule that activates signaling cascades downstream of NTRK2. During development, promotes the survival and differentiation of selected neuronal populations of the peripheral and central nervous systems. Participates in axonal growth, pathfinding and in the modulation of dendritic growth and morphology. Major regulator of synaptic transmission and plasticity at adult synapses in many regions of the CNS. The versatility of BDNF is emphasized by its contribution to a range of adaptive neuronal responses including long-term potentiation (LTP), long-term depression (LTD), certain forms of short-term synaptic plasticity, as well as homeostatic regulation of intrinsic neuronal excitability. In terms of biological role, important signaling molecule that activates signaling cascades downstream of NTRK2. Activates signaling cascades via the heterodimeric receptor formed by NGFR and SORCS2. Signaling via NGFR and SORCS2 plays a role in synaptic plasticity and long-term depression (LTD). Binding to NGFR and SORCS2 promotes neuronal apoptosis. Promotes neuronal growth cone collapse. The polypeptide is Neurotrophic factor BDNF precursor form (BDNF) (Helarctos malayanus (Malayan sun bear)).